Here is a 370-residue protein sequence, read N- to C-terminus: Integrin-linked kinase-associated serine/threonine phosphatase 2C (370 aa).

M1 is subject to N-acetylmethionine. The interval 1–69 (MDLFGDLPEP…SDEEKNGSEE (69 aa)) is disordered. S13 carries the post-translational modification Phosphoserine. Over residues 33 to 45 (SSGDSGSLDTSLS) the composition is skewed to low complexity. Basic and acidic residues predominate over residues 46–69 (EEVKNEGKGAKRKASDEEKNGSEE). Residues 86–368 (KGYVAERKGE…DNVTVMVVRI (283 aa)) enclose the PPM-type phosphatase domain. Mn(2+) is bound by residues D130 and G131. K188 carries the N6-acetyllysine modification. 2 residues coordinate Mn(2+): D304 and D359.

It belongs to the PP2C family. In terms of assembly, interacts with ILK. Requires Mg(2+) as cofactor. The cofactor is Mn(2+).

It localises to the cytoplasm. The catalysed reaction is O-phospho-L-seryl-[protein] + H2O = L-seryl-[protein] + phosphate. It carries out the reaction O-phospho-L-threonyl-[protein] + H2O = L-threonyl-[protein] + phosphate. In terms of biological role, protein phosphatase that may play a role in regulation of cell cycle progression via dephosphorylation of its substrates whose appropriate phosphorylation states might be crucial for cell proliferation. Selectively associates with integrin linked kinase (ILK), to modulate cell adhesion and growth factor signaling. Inhibits the ILK-GSK3B signaling axis and may play an important role in inhibiting oncogenic transformation. The sequence is that of Integrin-linked kinase-associated serine/threonine phosphatase 2C (ILKAP) from Bos taurus (Bovine).